A 133-amino-acid chain; its full sequence is ATP synthase epsilon chain, chloroplastic (133 aa).

It belongs to the ATPase epsilon chain family. As to quaternary structure, F-type ATPases have 2 components, CF(1) - the catalytic core - and CF(0) - the membrane proton channel. CF(1) has five subunits: alpha(3), beta(3), gamma(1), delta(1), epsilon(1). CF(0) has three main subunits: a, b and c.

It is found in the plastid. The protein resides in the chloroplast thylakoid membrane. Produces ATP from ADP in the presence of a proton gradient across the membrane. The chain is ATP synthase epsilon chain, chloroplastic from Nicotiana sylvestris (Wood tobacco).